Reading from the N-terminus, the 428-residue chain is Trigger factor (428 aa).

Positions glycine 163–proline 248 constitute a PPIase FKBP-type domain.

This sequence belongs to the FKBP-type PPIase family. Tig subfamily.

It localises to the cytoplasm. The enzyme catalyses [protein]-peptidylproline (omega=180) = [protein]-peptidylproline (omega=0). Functionally, involved in protein export. Acts as a chaperone by maintaining the newly synthesized protein in an open conformation. Functions as a peptidyl-prolyl cis-trans isomerase. This chain is Trigger factor, found in Anoxybacillus flavithermus (strain DSM 21510 / WK1).